We begin with the raw amino-acid sequence, 182 residues long: Transmembrane and coiled-coil domain-containing protein 2 (182 aa).

A run of 2 helical transmembrane segments spans residues 10 to 30 and 50 to 70; these read IIID…TLLG and VQVI…YALW. Residues 122 to 149 adopt a coiled-coil conformation; that stretch reads GLQEKILKKLQTVENKVKDLEGMIISQK.

The protein localises to the membrane. This Bos taurus (Bovine) protein is Transmembrane and coiled-coil domain-containing protein 2 (TMCO2).